The chain runs to 139 residues: Insulin-like growth factor (139 aa).

The first 38 residues, 1-38 (YIRRVRQGSIYSLLVESQQWCKLTLTLLLLLALLTRCT), serve as a signal peptide directing secretion. The tract at residues 39-67 (LSETLCGSELVDTLQFVCDDRGFFFVPQH) is b. Positions 68-82 (VPPRRGAHRRSRARK) are c. An a region spans residues 83-103 (GIVEECCFKGCSLRLLEMYCA). The tract at residues 104-113 (RPSKAERDVA) is d. Residues 108-139 (AERDVARPRQRPHRASQHSRRGSQSRGRGRSR) form a disordered region. Residues 114–139 (RPRQRPHRASQHSRRGSQSRGRGRSR) form an e region. The span at 115–139 (PRQRPHRASQHSRRGSQSRGRGRSR) shows a compositional bias: basic residues.

The protein belongs to the insulin family.

The protein resides in the secreted. Functionally, the insulin-like growth factors, isolated from plasma, are structurally and functionally related to insulin but have a much higher growth-promoting activity. This chain is Insulin-like growth factor, found in Myxine glutinosa (Atlantic hagfish).